The primary structure comprises 383 residues: G-protein coupled receptor E1 (383 aa).

Transmembrane regions (helical) follow at residues 13 to 35, 78 to 98, 109 to 129, 160 to 180, 190 to 210, 242 to 262, 279 to 299, 323 to 343, and 351 to 371; these read SSLA…TTIA, LYLL…IIVI, MLLL…PFWM, VFCI…AVTA, IVTC…EFFF, VIML…YVII, LIFV…IVLL, LITK…YAFV, and LYHF…PFLS. Cysteine 145 and cysteine 222 are oxidised to a cystine.

Belongs to the G-protein coupled receptor 1 family.

The protein resides in the host membrane. This Equine herpesvirus 2 (strain 86/87) (EHV-2) protein is G-protein coupled receptor E1 (E1).